The chain runs to 280 residues: Bis(5'-nucleosyl)-tetraphosphatase, symmetrical (280 aa).

This sequence belongs to the Ap4A hydrolase family.

The catalysed reaction is P(1),P(4)-bis(5'-adenosyl) tetraphosphate + H2O = 2 ADP + 2 H(+). Hydrolyzes diadenosine 5',5'''-P1,P4-tetraphosphate to yield ADP. The protein is Bis(5'-nucleosyl)-tetraphosphatase, symmetrical of Paracidovorax citrulli (strain AAC00-1) (Acidovorax citrulli).